The following is a 319-amino-acid chain: Probable cytochrome c oxidase subunit 2 (319 aa).

A signal peptide spans 1–33; it reads MSPNGSDRSPRRPMRRKLLQALTAGLVLATATG. The next 2 helical transmembrane spans lie at 63-83 and 101-121; these read WAAA…ATIF and MPIE…LFYF. Cu cation is bound by residues H227, C262, C266, and H270.

The protein belongs to the cytochrome c oxidase subunit 2 family. It depends on Cu cation as a cofactor. The cofactor is heme.

Its subcellular location is the cell membrane. The enzyme catalyses 4 Fe(II)-[cytochrome c] + O2 + 8 H(+)(in) = 4 Fe(III)-[cytochrome c] + 2 H2O + 4 H(+)(out). Functionally, subunits I and II form the functional core of the enzyme complex. Electrons originating in cytochrome c are transferred via heme a and Cu(A) to the binuclear center formed by heme a3 and Cu(B). This Streptomyces avermitilis (strain ATCC 31267 / DSM 46492 / JCM 5070 / NBRC 14893 / NCIMB 12804 / NRRL 8165 / MA-4680) protein is Probable cytochrome c oxidase subunit 2 (ctaC).